A 696-amino-acid polypeptide reads, in one-letter code: Glycine--tRNA ligase beta subunit (696 aa).

Belongs to the class-II aminoacyl-tRNA synthetase family. In terms of assembly, tetramer of two alpha and two beta subunits.

It localises to the cytoplasm. It catalyses the reaction tRNA(Gly) + glycine + ATP = glycyl-tRNA(Gly) + AMP + diphosphate. The sequence is that of Glycine--tRNA ligase beta subunit from Oleidesulfovibrio alaskensis (strain ATCC BAA-1058 / DSM 17464 / G20) (Desulfovibrio alaskensis).